Here is a 245-residue protein sequence, read N- to C-terminus: Photosystem II protein PSBS2 (245 aa).

A chloroplast-targeting transit peptide spans 1–25 (MAMTLSTKAFAQRGVSARKNTVRVY). 4 helical membrane passes run 72-92 (LFVG…EILT), 108-128 (GIEV…AAVL), 185-205 (LGFA…LAQF), and 217-237 (EFGL…EGSG).

Belongs to the ELIP/psbS family.

The protein localises to the plastid. The protein resides in the chloroplast thylakoid membrane. Required for non-photochemical quenching (NPQ), a mechanism that converts and dissipates the harmful excess absorbed light energy into heat and protect the photosynthetic apparatus from photo-oxidative damage. Seems involved in the activation of NPQ, possibly by promoting conformational changes required for activation of LHCSR3-dependent quenching in the antenna of photosystem II (PSII). The polypeptide is Photosystem II protein PSBS2 (Chlamydomonas reinhardtii (Chlamydomonas smithii)).